Reading from the N-terminus, the 260-residue chain is MTDEPRNASIRMDALQAHHAEAAARWATRLGLPRVGETDFALQLGDQGLQLVELGDKAPGPVRVDFVEGAAAHRRQFGGGSGQMIAKAVGVQSGIRPRILDATAGLGRDAFVLASLGCEMTLIERQPLIAALLEDGLQRAELDLEVAPIAARMRLLTGNAIDLMQNWQGEAPQVIYLDPMFPHRDKSALVKKEMRLFRPFVGDDLDAPALLAAALALASHRVVVKRPRKAPAIEGTKPGYVLEGKSSRYDVYPKKKLEGA.

Residues 108 to 109 (RD), 124 to 125 (ER), and D178 contribute to the S-adenosyl-L-methionine site.

Belongs to the methyltransferase superfamily. RsmJ family.

It localises to the cytoplasm. It catalyses the reaction guanosine(1516) in 16S rRNA + S-adenosyl-L-methionine = N(2)-methylguanosine(1516) in 16S rRNA + S-adenosyl-L-homocysteine + H(+). Functionally, specifically methylates the guanosine in position 1516 of 16S rRNA. This is Ribosomal RNA small subunit methyltransferase J from Ectopseudomonas mendocina (strain ymp) (Pseudomonas mendocina).